Here is a 274-residue protein sequence, read N- to C-terminus: Penicillin-insensitive murein endopeptidase (274 aa).

An N-terminal signal peptide occupies residues 1 to 19 (MKKTAIALLAWFVSSASLA). Cystine bridges form between C44/C265, C187/C235, and C216/C223. Zn(2+) is bound by residues H110, H113, D120, D147, H150, and H211. The tract at residues 225 to 274 (DQPLPPPGDGCGAELQSWFEPPKPGTTKPEKKTPPPLPPSCQALLDEHVL) is disordered.

Belongs to the peptidase M74 family. As to quaternary structure, dimer. Requires Zn(2+) as cofactor.

It localises to the periplasm. Murein endopeptidase that cleaves the D-alanyl-meso-2,6-diamino-pimelyl amide bond that connects peptidoglycan strands. Likely plays a role in the removal of murein from the sacculus. In Salmonella arizonae (strain ATCC BAA-731 / CDC346-86 / RSK2980), this protein is Penicillin-insensitive murein endopeptidase.